A 264-amino-acid chain; its full sequence is NADH-quinone oxidoreductase subunit I 2 (264 aa).

4Fe-4S ferredoxin-type domains follow at residues 57 to 86 (GFLE…ISLE) and 98 to 127 (TQFD…HTRE). [4Fe-4S] cluster is bound by residues Cys-66, Cys-69, Cys-72, Cys-76, Cys-107, Cys-110, Cys-113, and Cys-117. The segment at 183–264 (APQFLPPEPP…AAPAANPESK (82 aa)) is disordered. The segment covering 197-264 (AKPAAKAAPA…AAPAANPESK (68 aa)) has biased composition (low complexity).

It belongs to the complex I 23 kDa subunit family. In terms of assembly, NDH-1 is composed of 14 different subunits. Subunits NuoA, H, J, K, L, M, N constitute the membrane sector of the complex. Requires [4Fe-4S] cluster as cofactor.

It localises to the cell inner membrane. It carries out the reaction a quinone + NADH + 5 H(+)(in) = a quinol + NAD(+) + 4 H(+)(out). Its function is as follows. NDH-1 shuttles electrons from NADH, via FMN and iron-sulfur (Fe-S) centers, to quinones in the respiratory chain. The immediate electron acceptor for the enzyme in this species is believed to be ubiquinone. Couples the redox reaction to proton translocation (for every two electrons transferred, four hydrogen ions are translocated across the cytoplasmic membrane), and thus conserves the redox energy in a proton gradient. In Anaeromyxobacter dehalogenans (strain 2CP-C), this protein is NADH-quinone oxidoreductase subunit I 2.